A 102-amino-acid chain; its full sequence is Putative ribosomal protein uL13-like (102 aa).

The protein belongs to the universal ribosomal protein uL13 family.

This chain is Putative ribosomal protein uL13-like (RPL13AP3), found in Homo sapiens (Human).